Reading from the N-terminus, the 101-residue chain is Small ribosomal subunit protein bS18c (101 aa).

Belongs to the bacterial ribosomal protein bS18 family. Part of the 30S ribosomal subunit.

The protein resides in the plastid. Its subcellular location is the chloroplast. The chain is Small ribosomal subunit protein bS18c from Lepidium virginicum (Virginia pepperweed).